We begin with the raw amino-acid sequence, 1364 residues long: Formin-like protein 6 (1364 aa).

The 185-residue stretch at 9-193 (YRKPPDGLLE…HYISRRNVSA (185 aa)) folds into the Phosphatase tensin-type domain. Cysteine 126 functions as the Phosphocysteine intermediate in the catalytic mechanism. The C2 tensin-type domain occupies 199–338 (DRALTLDCVI…FRAEVLFSEM (140 aa)). Disordered stretches follow at residues 614 to 934 (KCTP…NLKP), 976 to 999 (VLPS…KPEK), and 1317 to 1364 (EAEA…ASAK). Positions 617 to 631 (PSPPPLLPPLAPVVP) are enriched in pro residues. Over residues 657-690 (SFPSLSPTQQKQSTSKLCQTILPTNHQLSSSNIT) the composition is skewed to polar residues. Over residues 734–743 (PPAPPPPPLQ) the composition is skewed to pro residues. Over residues 744 to 757 (SPSTPRCSPVRTLA) the composition is skewed to low complexity. Composition is skewed to pro residues over residues 774-813 (GPPP…PAAP) and 856-865 (PSPPPPPPPC). A compositionally biased stretch (polar residues) spans 916–929 (MSRSLQSGQAASRR). The FH2 domain occupies 922–1322 (SGQAASRRSN…KALKEAEAEK (401 aa)). Positions 1317–1351 (EAEAEKTKKEPENAQKTKEPGNDKAKHNNSIKELD) are enriched in basic and acidic residues. A compositionally biased stretch (polar residues) spans 1353–1364 (SLQSPAQTASAK).

It belongs to the formin-like family. Class-II subfamily.

The chain is Formin-like protein 6 (FH6) from Oryza sativa subsp. japonica (Rice).